A 106-amino-acid polypeptide reads, in one-letter code: MIIATTDTIAGKEITKTLGMARGSTIQAKHLGKDIMSGLRSVVGGELTEYSKMLEEAREKAINRMVEDAEKMGADAVVNVRFMTSMVMAGAAEILAYGTAVKIMNR.

This sequence belongs to the UPF0145 family.

This Methanosarcina acetivorans (strain ATCC 35395 / DSM 2834 / JCM 12185 / C2A) protein is UPF0145 protein MA_3383.